Consider the following 312-residue polypeptide: DNA-directed RNA polymerase subunit alpha (312 aa).

The alpha N-terminal domain (alpha-NTD) stretch occupies residues 1–229 (MLQYQIDRIE…ELFQPLATVT (229 aa)). The tract at residues 239 to 312 (EPTAEAQIPL…IQIPQSRTSA (74 aa)) is alpha C-terminal domain (alpha-CTD).

The protein belongs to the RNA polymerase alpha chain family. In terms of assembly, in cyanobacteria the RNAP catalytic core is composed of 2 alpha, 1 beta, 1 beta', 1 gamma and 1 omega subunit. When a sigma factor is associated with the core the holoenzyme is formed, which can initiate transcription.

It catalyses the reaction RNA(n) + a ribonucleoside 5'-triphosphate = RNA(n+1) + diphosphate. DNA-dependent RNA polymerase catalyzes the transcription of DNA into RNA using the four ribonucleoside triphosphates as substrates. The sequence is that of DNA-directed RNA polymerase subunit alpha from Synechococcus sp. (strain WH7803).